Reading from the N-terminus, the 354-residue chain is Uroporphyrinogen decarboxylase (354 aa).

Substrate-binding positions include 27-31 (RQAGR), D77, Y154, T209, and H327.

Belongs to the uroporphyrinogen decarboxylase family. In terms of assembly, homodimer.

It localises to the cytoplasm. It catalyses the reaction uroporphyrinogen III + 4 H(+) = coproporphyrinogen III + 4 CO2. The protein operates within porphyrin-containing compound metabolism; protoporphyrin-IX biosynthesis; coproporphyrinogen-III from 5-aminolevulinate: step 4/4. In terms of biological role, catalyzes the decarboxylation of four acetate groups of uroporphyrinogen-III to yield coproporphyrinogen-III. The chain is Uroporphyrinogen decarboxylase from Escherichia coli O17:K52:H18 (strain UMN026 / ExPEC).